Consider the following 372-residue polypeptide: Probable E3 ubiquitin-protein ligase makorin-1 (372 aa).

2 C3H1-type zinc fingers span residues 20 to 45 (KHVT…HDLT) and 48 to 75 (KPAA…HCKP). The interval 78–110 (NEEFSSPQMLPPSSPSPSTDPESSQPAPRPKTQ) is disordered. Residues 93–103 (SPSTDPESSQP) are compositionally biased toward low complexity. The segment at 153 to 180 (ALRKQLCPYAAVGECRYGINCAYLHGDV) adopts a C3H1-type 3 zinc-finger fold. The makorin-type Cys-His stretch occupies residues 181-208 (CDMCGLQVLHPTDNSQRSQHTKACIEAH). Residues 226–280 (CGVCMEVVFEKANPSERRFGILSNCNHCYCLKCIRKWRSAKQFESKIIKSCPECR) form an RING-type zinc finger. The segment at 309 to 338 (GMGRKPCRYFDEGRGICPFGANCFYKHAFP) adopts a C3H1-type 4 zinc-finger fold.

It carries out the reaction S-ubiquitinyl-[E2 ubiquitin-conjugating enzyme]-L-cysteine + [acceptor protein]-L-lysine = [E2 ubiquitin-conjugating enzyme]-L-cysteine + N(6)-ubiquitinyl-[acceptor protein]-L-lysine.. Its pathway is protein modification; protein ubiquitination. Functionally, E3 ubiquitin ligase catalyzing the covalent attachment of ubiquitin moieties onto substrate proteins. In Tetraodon nigroviridis (Spotted green pufferfish), this protein is Probable E3 ubiquitin-protein ligase makorin-1.